We begin with the raw amino-acid sequence, 541 residues long: Myrosinase 1 (541 aa).

The first 19 residues, 1 to 19, serve as a signal peptide directing secretion; sequence MKLLMLAFVFLLALATCKG. 3 cysteine pairs are disulfide-bonded: Cys-24–Cys-449, Cys-32–Cys-445, and Cys-224–Cys-232. Asn-33 carries an N-linked (GlcNAc...) asparagine glycan. Gln-57 is an a beta-D-glucoside binding site. Asn-108 carries an N-linked (GlcNAc...) asparagine glycan. His-159 is a binding site for a beta-D-glucoside. Asn-175 carries N-linked (GlcNAc...) asparagine glycosylation. Residue 204–205 participates in a beta-D-glucoside binding; it reads NQ. Asn-236 is a glycosylation site (N-linked (GlcNAc...) asparagine). Tyr-348 is an a beta-D-glucoside binding site. N-linked (GlcNAc...) asparagine glycosylation is found at Asn-356 and Asn-379. A beta-D-glucoside contacts are provided by residues Glu-420, Trp-468, 475 to 476, and Phe-484; that span reads EF. The active-site Nucleophile is Glu-420. Residues Asn-493 and Asn-512 are each glycosylated (N-linked (GlcNAc...) asparagine).

Belongs to the glycosyl hydrolase 1 family. As to quaternary structure, homodimer. As to expression, expressed in guard cells, phloem-associated cells and myrosin cells.

The protein localises to the vacuole. It catalyses the reaction a thioglucoside + H2O = a sugar + a thiol.. The enzyme catalyses Hydrolysis of terminal, non-reducing beta-D-glucosyl residues with release of beta-D-glucose.. Functionally, degradation of glucosinolates (glucose residue linked by a thioglucoside bound to an amino acid derivative) to glucose, sulfate and any of the products: thiocyanates, isothiocyanates, nitriles, epithionitriles or oxazolidine-2-thiones. These toxic degradation products can deter insect herbivores. Seems to function in abscisic acid (ABA) and methyl jasmonate (MeJA) signaling in guard cells. Functionally redundant with TGG2. Hydrolyzes sinigrin and, with lower efficiency, p-nitrophenyl beta-D-glucoside. This chain is Myrosinase 1, found in Arabidopsis thaliana (Mouse-ear cress).